We begin with the raw amino-acid sequence, 246 residues long: Small ribosomal subunit protein uS2 (246 aa).

The protein belongs to the universal ribosomal protein uS2 family.

In Burkholderia cenocepacia (strain ATCC BAA-245 / DSM 16553 / LMG 16656 / NCTC 13227 / J2315 / CF5610) (Burkholderia cepacia (strain J2315)), this protein is Small ribosomal subunit protein uS2.